Consider the following 733-residue polypeptide: Cyclic nucleotide-gated channel (733 aa).

2 disordered regions span residues 1-33 (MSTAEPAPDPTNPSTSGLAPTTNGIGSPPPTAS) and 67-95 (PNGNSNAVQPAATGGQPASSDGGSAIEVP). Topologically, residues 1 to 125 (MSTAEPAPDP…PSTDNFYYWT (125 aa)) are cytoplasmic. The span at 12–25 (NPSTSGLAPTTNGI) shows a compositional bias: polar residues. Residues 126-148 (CVVTVAYIYNLLFVIARQVFNDL) form a helical membrane-spanning segment. Residues 149–197 (IGPSSQSLCRFYNGTLNSTTQVECTYNMLTNMKEMPTYSQYPDLGWSKY) are Extracellular-facing. The helical transmembrane segment at 198-217 (WHFRMLWVFFDLLMDCVYLI) threads the bilayer. The Cytoplasmic segment spans residues 218-251 (DTFLNYRMGYMDQGLVVREAEKVTKAYWQSKQYR). A helical membrane pass occupies residues 252-265 (IDGISLIPLDYILG). The Extracellular segment spans residues 266–276 (WPIPYINWRGL). Residues 277 to 287 (PILRLNRLIRY) traverse the membrane as a helical segment. The Cytoplasmic portion of the chain corresponds to 288-308 (KRVRNCLERTETRSSMPNAFR). A helical transmembrane segment spans residues 309 to 331 (VVVVVWYIVIIIHWNACLYFWIS). The Extracellular portion of the chain corresponds to 332–362 (EWIGLGTDAWVYGHLNKQSLPDDITDTLLRR). Transmembrane regions (helical) follow at residues 363-385 (YVYSFYWSTLILTTIGEVPSPVR) and 386-411 (NIEYAFVTLDLMCGVLIFATIVGNVG). Residues 376–379 (TIGE) form a selectivity filter region. Glutamate 379 contacts Na(+). Residues 412–733 (SMISNMSAAR…TGTESESLLK (322 aa)) are Cytoplasmic-facing. A C-linker region spans residues 419–496 (AARTEFQNKM…TLRKVRIFQD (78 aa)). The segment at 493–607 (IFQDCEAGLL…ALREYPDARK (115 aa)) is cyclic nucleotide-binding domain. A 3',5'-cyclic GMP-binding site is contributed by glycine 559. Residue glutamate 560 coordinates 3',5'-cyclic AMP. Residues serine 562, arginine 575, threonine 576, lysine 619, and aspartate 620 each contribute to the 3',5'-cyclic GMP site. Arginine 575 lines the 3',5'-cyclic AMP pocket. The disordered stretch occupies residues 694–733 (SIDGGDISTDGVDERVRPPRLRQTKTIDLPTGTESESLLK).

Belongs to the cyclic nucleotide-gated cation channel (TC 1.A.1.5) family. Homotetramer. Expressed at the sensory endings of thermosensory, gustatory, and olfactory neurons.

The protein resides in the cell membrane. It is found in the cell projection. The protein localises to the cilium. It catalyses the reaction Ca(2+)(in) = Ca(2+)(out). It carries out the reaction Na(+)(in) = Na(+)(out). The enzyme catalyses K(+)(in) = K(+)(out). Its function is as follows. Pore-forming subunit of the cyclic nucleotide-gated channel. Required for normal thermosensation and chemosensation sensory behavior. Required, downstream of receptor-type guanylate cyclase gcy-9, for CO2-mediated responses in BAG neurons. Required, downstream of receptor-type guanylate cyclase gcy-14, for alkaline pH-mediated responses in ASE-left (ASEL) neurons. Involved in the development of ASJ sensory neuron axon during late larval stages and in the maintenance of normal axon morphology in the adult. Regulates dauer formation. Required for the calcium flux to the cytoplasm in the ASJ sensory neurons upon the onset and removal of a nitric oxide (NO) stimulus, thereby promoting the ASJ-mediated behavioral avoidance response to NO-producing organisms like P.aeruginosa. In ASI and ASJ sensory neurons, controls behavioral response to P.aeruginosa by up-regulating the transcription of daf-7, a member of the TGF-beta family. In AWB and AWC sensory neurons, mediates the recognition of food odors which subsequently allows for the detection of preferred food sources. In AWC neurons, acts to promote expression of srsx-3, a member of the GPCR family. Binding to cGMP results in conformational changes at the hydrophobic gate that converts the protein from an inactive closed state to an active open state. The sequence is that of Cyclic nucleotide-gated channel (tax-4) from Caenorhabditis elegans.